Reading from the N-terminus, the 428-residue chain is Gamma-glutamyl phosphate reductase (428 aa).

This sequence belongs to the gamma-glutamyl phosphate reductase family.

Its subcellular location is the cytoplasm. The enzyme catalyses L-glutamate 5-semialdehyde + phosphate + NADP(+) = L-glutamyl 5-phosphate + NADPH + H(+). Its pathway is amino-acid biosynthesis; L-proline biosynthesis; L-glutamate 5-semialdehyde from L-glutamate: step 2/2. Catalyzes the NADPH-dependent reduction of L-glutamate 5-phosphate into L-glutamate 5-semialdehyde and phosphate. The product spontaneously undergoes cyclization to form 1-pyrroline-5-carboxylate. This chain is Gamma-glutamyl phosphate reductase, found in Hyphomonas neptunium (strain ATCC 15444).